A 100-amino-acid chain; its full sequence is Large ribosomal subunit protein bL21 (100 aa).

It belongs to the bacterial ribosomal protein bL21 family. As to quaternary structure, part of the 50S ribosomal subunit. Contacts protein L20.

This protein binds to 23S rRNA in the presence of protein L20. In Mycoplasmoides gallisepticum (strain R(low / passage 15 / clone 2)) (Mycoplasma gallisepticum), this protein is Large ribosomal subunit protein bL21.